Here is a 299-residue protein sequence, read N- to C-terminus: Caspase-1 (299 aa).

A propeptide spanning residues 1–28 is cleaved from the precursor; sequence MLDGKQDNGNVDSVDIKQRTNGGGDEGD. The segment at 1-45 is disordered; the sequence is MLDGKQDNGNVDSVDIKQRTNGGGDEGDALGSNSSSQPNRVARMP. Catalysis depends on residues histidine 136 and cysteine 178. Positions 185 to 195 are excised as a propeptide; sequence GGITLSRTETD.

It belongs to the peptidase C14A family. Heterotetramer that consists of two anti-parallel arranged heterodimers, each one formed by a 19/18 kDa (p19/18) and a 12 kDa (p12) subunit. The two subunits are derived from the precursor sequence by an autocatalytic mechanism.

Functionally, involved in the activation cascade of caspases responsible for apoptosis execution. Inhibited by the baculovirus anti-apoptotic protein p35. Cleaves p35 and nuclear immunophilin FKBP46. This chain is Caspase-1, found in Spodoptera frugiperda (Fall armyworm).